A 388-amino-acid chain; its full sequence is Endoglucanase 3 (388 aa).

Positions 1–16 (MKHSVLAGLFATGALA) are cleaved as a signal peptide. The 36-residue stretch at 17–52 (QGGAWQQCGGVGFSGSTSCVSGYTCVYLNDWYSQCQ) folds into the CBM1 domain. 2 disulfide bridges follow: cysteine 24–cysteine 41 and cysteine 35–cysteine 51. The linker stretch occupies residues 53–91 (PQPTTLRTTTTPGATSTTRSAPAATSTTPAKGKFKWFGI). The interval 56 to 81 (TTLRTTTTPGATSTTRSAPAATSTTP) is disordered. N-linked (GlcNAc...) asparagine glycans are attached at residues asparagine 92 and asparagine 155. Residues 92-388 (NQSCAEFGKG…YNSLLKKYVP (297 aa)) form a catalytic region. Glutamate 215 acts as the Proton donor in catalysis. The N-linked (GlcNAc...) asparagine glycan is linked to asparagine 259. Glutamate 322 acts as the Nucleophile in catalysis.

This sequence belongs to the glycosyl hydrolase 5 (cellulase A) family.

The catalysed reaction is Endohydrolysis of (1-&gt;4)-beta-D-glucosidic linkages in cellulose, lichenin and cereal beta-D-glucans.. In Humicola insolens (Soft-rot fungus), this protein is Endoglucanase 3 (CMC3).